The chain runs to 304 residues: Movement protein (304 aa).

Positions 257–304 (ETNKLSDVESSSDSSSLLSMRARSRRYTKNYKIPIKRHPQATGEVGTT) are disordered. Residues 264–277 (VESSSDSSSLLSMR) are compositionally biased toward low complexity. A compositionally biased stretch (basic residues) spans 278 to 295 (ARSRRYTKNYKIPIKRHP).

Its function is as follows. Cell-to-cell movement and long-distance transport of the viral infection. Also acts as a suppressor of RNA-mediated gene silencing, also known as post-transcriptional gene silencing (PTGS), a mechanism of plant viral defense that limits the accumulation of viral RNAs. The sequence is that of Movement protein from Carnation ringspot virus (isolate Lommel) (CRSV).